A 406-amino-acid polypeptide reads, in one-letter code: NAC transcription factor NAM-1 (406 aa).

Residues 1-11 (MGSPDSSSGSA) are compositionally biased toward polar residues. The disordered stretch occupies residues 1-40 (MGSPDSSSGSAQKPPRHQHQHQPPPPRRQGSAPELPPGFR). In terms of domain architecture, NAC spans 35–204 (LPPGFRFHPT…DWVLCRIYKK (170 aa)). The DNA-binding element occupies 137-210 (VGVKKALVFY…IYKKTSKAAA (74 aa)).

It is found in the nucleus. Its function is as follows. Transcription factor of the NAC family associated with the grain protein content (GPC). Accelerates senescence and increases nutrient remobilization from leaves to developing grains. Sequences of 11 European varieties of H.vulgare tested belongs to the same haplotype while the sequence found in H.spontaneum, an ancestor of the cultivated H.vulgare which has a higher GPC, belongs to an other haplotype. The polypeptide is NAC transcription factor NAM-1 (NAM-1) (Hordeum vulgare subsp. vulgare (Domesticated barley)).